The chain runs to 102 residues: uncharacterized protein (102 aa).

This is an uncharacterized protein from Ictaluridae (bullhead catfishes).